Here is a 410-residue protein sequence, read N- to C-terminus: BRCA1-A complex subunit Abraxas 1 (410 aa).

Positions 7–160 (TAVLSGFVLG…HALYKPQKGL (154 aa)) constitute an MPN domain. S48 bears the Phosphoserine mark. The stretch at 208-261 (SLKEVQKINEMYTSLQDELKSICEKVEHSERAVEKLLNDVNRLKGEIKKRKQAQ) forms a coiled coil. The segment at 354-410 (DGWQFKKSRLGGIQNRPSKTDTNSSNQEQASTVSSPETDEEIERMKGSGEYPQSPTF) is disordered. The span at 368 to 389 (NRPSKTDTNSSNQEQASTVSSP) shows a compositional bias: polar residues. Phosphoserine occurs at positions 387 and 388. T391 is modified (phosphothreonine). S407 is subject to Phosphoserine. A pSXXF motif motif is present at residues 407 to 410 (SPTF).

This sequence belongs to the FAM175 family. Abraxas subfamily. In terms of assembly, component of the ARISC complex, at least composed of UIMC1/RAP80, ABRAXAS1, BRCC3/BRCC36, BABAM2 and BABAM1/NBA1. Component of the BRCA1-A complex, at least composed of the BRCA1, BARD1, UIMC1/RAP80, ABRAXAS1, BRCC3/BRCC36, BABAM2 and BABAM1/NBA1. In the complex, interacts directly with UIMC1/RAP80, BRCC3/BRCC36 and BABAM2. Homodimer. Interacts directly (when phosphorylated at Ser-407) with BRCA1. The phosphorylated homodimer can interact directly with two BRCA1 chains, giving rise to a heterotetramer. Binds polyubiquitin. In terms of processing, phosphorylation of Ser-407 of the pSXXF motif by ATM or ATR constitutes a specific recognition motif for the BRCT domain of BRCA1.

The protein localises to the nucleus. Its function is as follows. Involved in DNA damage response and double-strand break (DSB) repair. Component of the BRCA1-A complex, acting as a central scaffold protein that assembles the various components of the complex and mediates the recruitment of BRCA1. The BRCA1-A complex specifically recognizes 'Lys-63'-linked ubiquitinated histones H2A and H2AX at DNA lesion sites, leading to target the BRCA1-BARD1 heterodimer to sites of DNA damage at DSBs. This complex also possesses deubiquitinase activity that specifically removes 'Lys-63'-linked ubiquitin on histones H2A and H2AX. The protein is BRCA1-A complex subunit Abraxas 1 of Bos taurus (Bovine).